A 132-amino-acid polypeptide reads, in one-letter code: Major pollen allergen Art v 1 (132 aa).

Positions Met-1–Ala-24 are cleaved as a signal peptide. A defensin-like domain region spans residues Lys-28–Cys-77. Cystine bridges form between Cys-30–Cys-77, Cys-41–Cys-61, Cys-46–Cys-71, and Cys-50–Cys-73. 2 epitope recognized by IgE antibodies of mugwort pollen-sensitized patients regions span residues Arg-64–Ser-70 and Lys-79–Ala-87. The segment at Pro-81–His-132 is disordered. Pro residues predominate over residues Gly-83–Ala-114. Over residues Asp-115 to Gly-124 the composition is skewed to low complexity.

In the N-terminal section; belongs to the DEFL family. In terms of processing, the mature protein extracted from the plant exhibits an average rate of 76% of hydroxyprolines. O-glycosylated. O-linkage of 3 galactoses plus 9-16 or 21-23 arabinose residues attached on one or two hydroxyprolines.

It localises to the secreted. In Artemisia vulgaris (Mugwort), this protein is Major pollen allergen Art v 1.